We begin with the raw amino-acid sequence, 203 residues long: Molybdenum cofactor guanylyltransferase (203 aa).

GTP-binding positions include 12-14 (LAG), Lys-25, Asn-53, Asp-71, and Asp-101. Asp-101 serves as a coordination point for Mg(2+).

The protein belongs to the MobA family. As to quaternary structure, monomer. The cofactor is Mg(2+).

The protein resides in the cytoplasm. It carries out the reaction Mo-molybdopterin + GTP + H(+) = Mo-molybdopterin guanine dinucleotide + diphosphate. Functionally, transfers a GMP moiety from GTP to Mo-molybdopterin (Mo-MPT) cofactor (Moco or molybdenum cofactor) to form Mo-molybdopterin guanine dinucleotide (Mo-MGD) cofactor. This is Molybdenum cofactor guanylyltransferase from Methylibium petroleiphilum (strain ATCC BAA-1232 / LMG 22953 / PM1).